The chain runs to 864 residues: Mitochondrial 15S rRNA processing factor CCM1 (864 aa).

Residues 1-76 (MYMARCGPKN…REFSNTLKER (76 aa)) constitute a mitochondrion transit peptide. 2 PPR repeats span residues 319 to 353 (NKQN…STKH) and 356 to 390 (DICT…NIKP).

This sequence belongs to the CCM1 family. As to quaternary structure, binds to mitochondrial small subunit 15S rRNA.

The protein resides in the mitochondrion. Functionally, regulates mitochondrial small subunit maturation by controlling 15S rRNA 5'-end processing. Localizes to the 5' precursor of the 15S rRNA in a position that is subsequently occupied by mS47 in the mature yeast mtSSU. Uses structure and sequence-specific RNA recognition, binding to a single-stranded region of the precursor and specifically recognizing bases -6 to -1. The exchange of Ccm1 for mS47 is coupled to the irreversible removal of precursor rRNA that is accompanied by conformational changes of the mitoribosomal proteins uS5m and mS26. These conformational changes signal completion of 5'-end rRNA processing through protection of the mature 5'-end of the 15S rRNA and stabilization of mS47. The removal of the 5' precursor together with the dissociation of Ccm1 may be catalyzed by the 5'-3' exoribonuclease Pet127. Involved in the specific removal of group I introns in mitochondrial encoded transcripts. This Saccharomyces cerevisiae (strain RM11-1a) (Baker's yeast) protein is Mitochondrial 15S rRNA processing factor CCM1 (CCM1).